The sequence spans 67 residues: Beta-defensin 36 (67 aa).

A signal peptide spans 1 to 22 (MKLLLLTLAALLLVSQLTPGDA). 3 disulfides stabilise this stretch: Cys25/Cys52, Cys32/Cys46, and Cys36/Cys53.

This sequence belongs to the beta-defensin family.

It localises to the secreted. In terms of biological role, has antibacterial activity. The polypeptide is Beta-defensin 36 (Defb36) (Mus musculus (Mouse)).